Reading from the N-terminus, the 150-residue chain is Viral late gene transcription factor 2 (150 aa).

The protein belongs to the orthopoxvirus VLTF-2/OPG126 family. In terms of assembly, interacts with itself. Interacts with the late transcription factors VLTF-1/OPG093.

Acts with RNA polymerase to initiate transcription from late gene promoters. This Vaccinia virus (strain Copenhagen) (VACV) protein is Viral late gene transcription factor 2 (OPG126).